The sequence spans 450 residues: Phosphoglucosamine mutase (450 aa).

The active-site Phosphoserine intermediate is serine 103. 4 residues coordinate Mg(2+): serine 103, aspartate 243, aspartate 245, and aspartate 247. Phosphoserine is present on serine 103.

It belongs to the phosphohexose mutase family. Mg(2+) is required as a cofactor. Post-translationally, activated by phosphorylation.

It carries out the reaction alpha-D-glucosamine 1-phosphate = D-glucosamine 6-phosphate. Functionally, catalyzes the conversion of glucosamine-6-phosphate to glucosamine-1-phosphate. This Latilactobacillus sakei subsp. sakei (strain 23K) (Lactobacillus sakei subsp. sakei) protein is Phosphoglucosamine mutase.